Consider the following 206-residue polypeptide: Superoxide dismutase [Mn] (206 aa).

4 residues coordinate Mn(2+): His-27, His-82, Asp-168, and His-172.

It belongs to the iron/manganese superoxide dismutase family. As to quaternary structure, homodimer. Mn(2+) serves as cofactor.

It catalyses the reaction 2 superoxide + 2 H(+) = H2O2 + O2. Destroys superoxide anion radicals which are normally produced within the cells and which are toxic to biological systems. This chain is Superoxide dismutase [Mn] (sodA), found in Salmonella typhi.